A 157-amino-acid chain; its full sequence is ABA-responsive protein ABR17 (157 aa).

This sequence belongs to the BetVI family.

This Pisum sativum (Garden pea) protein is ABA-responsive protein ABR17.